We begin with the raw amino-acid sequence, 246 residues long: MILFPAIDLKDGQCVRLEQGDMARATVFNFDPAEQARAFASQGFEYLHVVDLDGAFAGRPVNADAVERMLKNVAMPVQLGGGIRDLKTVEAWLKKGITRVIIGTAAVRDPVLVKEAAKAFPGRVAVGLDARDGKVAVEGWAETSEVTALDIARRFEDAGIAAIIFTDIARDGLLKGLNLDATIALADSISIPVIASGGFASIADVKALLAPRAKKLAGAIAGRALYDGRLDPAEALALIRAARAAA.

Asp-8 acts as the Proton acceptor in catalysis. Asp-129 functions as the Proton donor in the catalytic mechanism.

This sequence belongs to the HisA/HisF family.

It is found in the cytoplasm. It catalyses the reaction 1-(5-phospho-beta-D-ribosyl)-5-[(5-phospho-beta-D-ribosylamino)methylideneamino]imidazole-4-carboxamide = 5-[(5-phospho-1-deoxy-D-ribulos-1-ylimino)methylamino]-1-(5-phospho-beta-D-ribosyl)imidazole-4-carboxamide. It functions in the pathway amino-acid biosynthesis; L-histidine biosynthesis; L-histidine from 5-phospho-alpha-D-ribose 1-diphosphate: step 4/9. This is 1-(5-phosphoribosyl)-5-[(5-phosphoribosylamino)methylideneamino] imidazole-4-carboxamide isomerase from Nitrobacter hamburgensis (strain DSM 10229 / NCIMB 13809 / X14).